The sequence spans 604 residues: Elongation factor 4 (604 aa).

A tr-type G domain is found at 7–190 (SRLRNFCIIA…IVDRVPAPPD (184 aa)). GTP contacts are provided by residues 19 to 24 (DHGKST) and 136 to 139 (NKID).

Belongs to the TRAFAC class translation factor GTPase superfamily. Classic translation factor GTPase family. LepA subfamily.

It localises to the cell inner membrane. It catalyses the reaction GTP + H2O = GDP + phosphate + H(+). Required for accurate and efficient protein synthesis under certain stress conditions. May act as a fidelity factor of the translation reaction, by catalyzing a one-codon backward translocation of tRNAs on improperly translocated ribosomes. Back-translocation proceeds from a post-translocation (POST) complex to a pre-translocation (PRE) complex, thus giving elongation factor G a second chance to translocate the tRNAs correctly. Binds to ribosomes in a GTP-dependent manner. This is Elongation factor 4 from Synechococcus sp. (strain RCC307).